The sequence spans 202 residues: Imidazoleglycerol-phosphate dehydratase (202 aa).

It belongs to the imidazoleglycerol-phosphate dehydratase family.

Its subcellular location is the cytoplasm. It carries out the reaction D-erythro-1-(imidazol-4-yl)glycerol 3-phosphate = 3-(imidazol-4-yl)-2-oxopropyl phosphate + H2O. It participates in amino-acid biosynthesis; L-histidine biosynthesis; L-histidine from 5-phospho-alpha-D-ribose 1-diphosphate: step 6/9. This is Imidazoleglycerol-phosphate dehydratase from Corynebacterium glutamicum (strain ATCC 13032 / DSM 20300 / JCM 1318 / BCRC 11384 / CCUG 27702 / LMG 3730 / NBRC 12168 / NCIMB 10025 / NRRL B-2784 / 534).